The following is a 546-amino-acid chain: CTP synthase (546 aa).

Positions 1–265 are amidoligase domain; it reads MTKYVFVTGG…DEIVCHKLGI (265 aa). S13 contributes to the CTP binding site. S13 contributes to the UTP binding site. ATP-binding positions include 14–19 and D71; that span reads SLGKGI. Mg(2+) is bound by residues D71 and E139. CTP contacts are provided by residues 146-148, 186-191, and K222; these read DIE and KTKPTQ. Residues 186–191 and K222 contribute to the UTP site; that span reads KTKPTQ. Positions 290–543 constitute a Glutamine amidotransferase type-1 domain; sequence DIAFVGKYVD…VKAAIARHSA (254 aa). G351 serves as a coordination point for L-glutamine. The Nucleophile; for glutamine hydrolysis role is filled by C378. Residues 379 to 382, E402, and R469 contribute to the L-glutamine site; that span reads LGMQ. Catalysis depends on residues H516 and E518.

The protein belongs to the CTP synthase family. In terms of assembly, homotetramer.

It catalyses the reaction UTP + L-glutamine + ATP + H2O = CTP + L-glutamate + ADP + phosphate + 2 H(+). The enzyme catalyses L-glutamine + H2O = L-glutamate + NH4(+). It carries out the reaction UTP + NH4(+) + ATP = CTP + ADP + phosphate + 2 H(+). It functions in the pathway pyrimidine metabolism; CTP biosynthesis via de novo pathway; CTP from UDP: step 2/2. Allosterically activated by GTP, when glutamine is the substrate; GTP has no effect on the reaction when ammonia is the substrate. The allosteric effector GTP functions by stabilizing the protein conformation that binds the tetrahedral intermediate(s) formed during glutamine hydrolysis. Inhibited by the product CTP, via allosteric rather than competitive inhibition. Its function is as follows. Catalyzes the ATP-dependent amination of UTP to CTP with either L-glutamine or ammonia as the source of nitrogen. Regulates intracellular CTP levels through interactions with the four ribonucleotide triphosphates. The polypeptide is CTP synthase (Azoarcus sp. (strain BH72)).